Reading from the N-terminus, the 311-residue chain is Systemic RNA interference defective protein 2 (311 aa).

The first 20 residues, 1–20 (MPRFVYFCFALIALLPISWT), serve as a signal peptide directing secretion. Topologically, residues 21–188 (MDGILITDVE…EETKTVVNKN (168 aa)) are extracellular. A helical membrane pass occupies residues 189 to 209 (GGAVAVAVIEGIALIAILAFL). Residues 210–311 (GYRTMVNHKL…NDPFATLESW (102 aa)) are Cytoplasmic-facing. Positions 287–301 (NSSAAQPSTTSNGQF) are enriched in polar residues. The interval 287 to 311 (NSSAAQPSTTSNGQFNDPFATLESW) is disordered.

As to expression, expressed in the intestinal lumen. Also present, at lower levels, in the excretory duct cells.

Its subcellular location is the apical cell membrane. It localises to the cytoplasm. Its function is as follows. Plays a role in RNA-mediated gene silencing by mediating endocytic uptake of double-stranded RNA (dsRNA) ingested from the environment into intestinal cells from the intestinal lumen. Selective for dsRNAs of at least 50 bp. Required for avoidance behavior induced by small RNAs derived from pathogenic bacteria such as P.aeruginosa. The polypeptide is Systemic RNA interference defective protein 2 (Caenorhabditis elegans).